The primary structure comprises 149 residues: MSENGFLFRFRDGQTYMDTWPERKELAPMFPEQRVIKATKFAVKVMPAVAVISVLTQMVFNNTAGLPQAIIIALFAISMPLQGFWWLGNRANTKLPPALASWYRELYQKIIESGAALEPMKSQPRYKELANILNKAFKQLDKTALERWF.

The next 2 helical transmembrane spans lie at 41-61 and 69-89; these read FAVK…MVFN and AIII…WLGN.

The protein belongs to the UPF0208 family.

The protein resides in the cell inner membrane. This is UPF0208 membrane protein VFMJ11_0876 from Aliivibrio fischeri (strain MJ11) (Vibrio fischeri).